The sequence spans 643 residues: Phosphomethylpyrimidine synthase (643 aa).

Residues Asn248, Met277, Tyr306, His342, Ser362 to Gly364, Asp403 to Arg406, and Glu442 contribute to the substrate site. His446 lines the Zn(2+) pocket. Substrate is bound at residue Tyr469. Position 510 (His510) interacts with Zn(2+). Residues Cys590, Cys593, and Cys598 each contribute to the [4Fe-4S] cluster site.

This sequence belongs to the ThiC family. As to quaternary structure, homodimer. [4Fe-4S] cluster is required as a cofactor.

The catalysed reaction is 5-amino-1-(5-phospho-beta-D-ribosyl)imidazole + S-adenosyl-L-methionine = 4-amino-2-methyl-5-(phosphooxymethyl)pyrimidine + CO + 5'-deoxyadenosine + formate + L-methionine + 3 H(+). It functions in the pathway cofactor biosynthesis; thiamine diphosphate biosynthesis. Its function is as follows. Catalyzes the synthesis of the hydroxymethylpyrimidine phosphate (HMP-P) moiety of thiamine from aminoimidazole ribotide (AIR) in a radical S-adenosyl-L-methionine (SAM)-dependent reaction. The sequence is that of Phosphomethylpyrimidine synthase from Burkholderia cenocepacia (strain HI2424).